Consider the following 257-residue polypeptide: 3-methyl-2-oxobutanoate hydroxymethyltransferase (257 aa).

Mg(2+) is bound by residues D42 and D86. 3-methyl-2-oxobutanoate contacts are provided by residues 42 to 43 (DS), D86, and K116. E118 serves as a coordination point for Mg(2+). E185 (proton acceptor) is an active-site residue.

It belongs to the PanB family. As to quaternary structure, homodecamer; pentamer of dimers. The cofactor is Mg(2+).

The protein resides in the cytoplasm. It carries out the reaction 3-methyl-2-oxobutanoate + (6R)-5,10-methylene-5,6,7,8-tetrahydrofolate + H2O = 2-dehydropantoate + (6S)-5,6,7,8-tetrahydrofolate. It functions in the pathway cofactor biosynthesis; (R)-pantothenate biosynthesis; (R)-pantoate from 3-methyl-2-oxobutanoate: step 1/2. Functionally, catalyzes the reversible reaction in which hydroxymethyl group from 5,10-methylenetetrahydrofolate is transferred onto alpha-ketoisovalerate to form ketopantoate. This Prochlorococcus marinus subsp. pastoris (strain CCMP1986 / NIES-2087 / MED4) protein is 3-methyl-2-oxobutanoate hydroxymethyltransferase.